Here is a 103-residue protein sequence, read N- to C-terminus: Protamine-2 (103 aa).

Residues 1–103 are disordered; it reads MVRYRMRSLS…RTRRRRCRRH (103 aa). 2 positions are modified to phosphoserine: Ser8 and Ser10. Residues 8 to 17 show a composition bias toward basic and acidic residues; sequence SLSERPHEVH. The span at 18–29 shows a compositional bias: low complexity; it reads GQQVHGQDQGHN. Residues 48–103 show a composition bias toward basic residues; sequence HRGHSHHRRRRCSRRRLHRIHRRRHRSCRRRRRRSCRHRRRHRRGCRTRRRRCRRH.

This sequence belongs to the protamine P2 family. As to quaternary structure, interacts with TDRP. Post-translationally, proteolytic processing into mature chains is required for histone eviction during spermatogenesis. Transition proteins (TNP1 and TNP2) are required for processing. Testis.

Its subcellular location is the nucleus. It is found in the chromosome. In terms of biological role, protamines substitute for histones in the chromatin of sperm during the haploid phase of spermatogenesis. They compact sperm DNA into a highly condensed, stable and inactive complex. This Macaca nemestrina (Pig-tailed macaque) protein is Protamine-2 (PRM2).